Here is a 67-residue protein sequence, read N- to C-terminus: MARITVEDCLNQIPNRFKLTLAATYRARELVQGHAPRLDSKDKPTVTALREIASGLTGLEMLRKVPT.

It belongs to the RNA polymerase subunit omega family. In terms of assembly, the RNAP catalytic core consists of 2 alpha, 1 beta, 1 beta' and 1 omega subunit. When a sigma factor is associated with the core the holoenzyme is formed, which can initiate transcription.

It carries out the reaction RNA(n) + a ribonucleoside 5'-triphosphate = RNA(n+1) + diphosphate. Promotes RNA polymerase assembly. Latches the N- and C-terminal regions of the beta' subunit thereby facilitating its interaction with the beta and alpha subunits. This chain is DNA-directed RNA polymerase subunit omega, found in Bordetella pertussis (strain Tohama I / ATCC BAA-589 / NCTC 13251).